We begin with the raw amino-acid sequence, 1405 residues long: DNA-directed RNA polymerase subunit beta' (1405 aa).

Residues Cys70, Cys72, Cys85, and Cys88 each contribute to the Zn(2+) site. Asp460, Asp462, and Asp464 together coordinate Mg(2+). 4 residues coordinate Zn(2+): Cys815, Cys890, Cys897, and Cys900. The segment at 1375–1405 (GLTDSEMETLSGKPAGAEPVAALADAGADEE) is disordered.

Belongs to the RNA polymerase beta' chain family. As to quaternary structure, the RNAP catalytic core consists of 2 alpha, 1 beta, 1 beta' and 1 omega subunit. When a sigma factor is associated with the core the holoenzyme is formed, which can initiate transcription. The cofactor is Mg(2+). Zn(2+) is required as a cofactor.

It carries out the reaction RNA(n) + a ribonucleoside 5'-triphosphate = RNA(n+1) + diphosphate. DNA-dependent RNA polymerase catalyzes the transcription of DNA into RNA using the four ribonucleoside triphosphates as substrates. The polypeptide is DNA-directed RNA polymerase subunit beta' (Xanthomonas oryzae pv. oryzae (strain MAFF 311018)).